We begin with the raw amino-acid sequence, 600 residues long: UvrABC system protein C (600 aa).

In terms of domain architecture, GIY-YIG spans Asn-15–Ile-100. One can recognise a UVR domain in the interval Ser-203–Leu-238.

Belongs to the UvrC family. In terms of assembly, interacts with UvrB in an incision complex.

The protein resides in the cytoplasm. Functionally, the UvrABC repair system catalyzes the recognition and processing of DNA lesions. UvrC both incises the 5' and 3' sides of the lesion. The N-terminal half is responsible for the 3' incision and the C-terminal half is responsible for the 5' incision. This is UvrABC system protein C from Campylobacter jejuni subsp. jejuni serotype O:23/36 (strain 81-176).